Reading from the N-terminus, the 299-residue chain is DNA repair protein RecO (299 aa).

Positions 1–62 (MTLNSDADPD…GRRAPRTPAS (62 aa)) are disordered. Positions 25 to 41 (ASKPARSTRKSSSAKSA) are enriched in low complexity.

Belongs to the RecO family.

In terms of biological role, involved in DNA repair and RecF pathway recombination. The chain is DNA repair protein RecO from Paraburkholderia xenovorans (strain LB400).